A 131-amino-acid chain; its full sequence is UPF0292 protein PF1724 (131 aa).

Residues 20–103 (KGVIIVEGKR…ETRRELQFIA (84 aa)) form the Toprim domain. Glu26, Asp69, and Asp71 together coordinate Mg(2+).

It belongs to the UPF0292 family. Mg(2+) serves as cofactor.

This is UPF0292 protein PF1724 from Pyrococcus furiosus (strain ATCC 43587 / DSM 3638 / JCM 8422 / Vc1).